The chain runs to 397 residues: tRNA pseudouridine synthase D (397 aa).

Residue Asp76 is the Nucleophile of the active site. In terms of domain architecture, TRUD spans Gly151–Val361.

This sequence belongs to the pseudouridine synthase TruD family.

It catalyses the reaction uridine(13) in tRNA = pseudouridine(13) in tRNA. Its function is as follows. Responsible for synthesis of pseudouridine from uracil-13 in transfer RNAs. This Geotalea daltonii (strain DSM 22248 / JCM 15807 / FRC-32) (Geobacter daltonii) protein is tRNA pseudouridine synthase D.